The sequence spans 393 residues: Protein TsgA (393 aa).

The next 12 membrane-spanning stretches (helical) occupy residues 11–31 (WISFLSYALTGALVIVTGMVM), 51–71 (FLNAGILISIFLNAWLMEIVP), 78–98 (FGFLLMVLAVAGLMFSHSLAL), 101–121 (AAMFILGVVSGITMSIGTFLV), 134–154 (LLFTDSFFSMAGMIFPMIAAF), 162–182 (WYWVYACIGLVYVAIFILTFG), 206–226 (IGVLFLSVAALCYILGQLGFI), 245–265 (TLVSNFWMSYMVGMWAFSFIL), 273–293 (ILTVLAGLAAILMYVFNTGTP), 297–317 (AWSILALGFFSSAIYTTIITL), 332–352 (FVLTCGTIGTMLTFVVTGPIV), and 361–381 (LLTANGLYAVVFVMCFLLGFV).

The protein belongs to the major facilitator superfamily. TsgA family.

Its subcellular location is the cell inner membrane. In Escherichia coli O6:K15:H31 (strain 536 / UPEC), this protein is Protein TsgA.